Reading from the N-terminus, the 146-residue chain is Snaclec coagulation factor X-activating enzyme light chain 1 (146 aa).

The N-terminal stretch at 1–23 (MGRFISVSFGCLVVFLSLSGTEA) is a signal peptide. An intrachain disulfide couples Cys27 to Cys38. The C-type lectin domain occupies 34–145 (YEQHCYKGFN…CNFIAPVVCK (112 aa)). An N-linked (GlcNAc...) (complex) asparagine glycan is attached at Asn47. 2 disulfide bridges follow: Cys55–Cys144 and Cys121–Cys136.

It belongs to the snaclec family. As to quaternary structure, heterotrimer; disulfide-linked. The heterotrimer consists of 1 heavy chain (a metalloproteinase) and 2 light chains: LC1 and LC2. Post-translationally, N-glycosylated; probably required for conformation. Removal of easily accessible sugars does not change its functional capacity, but removal of the core sugars with N-glycanase causes a virtually complete loss of enzyme activity, apparently as a result of major conformational changes in the molecule. Not O-glycosylated. As to expression, expressed by the venom gland.

It is found in the secreted. In terms of biological role, regulatory subunit of the blood coagulation factor X- and IX-activating enzyme. The enzyme activates coagulation factor X (F10) by cleaving the Arg-Ile bond and is also able to activate coagulation factor IX (F9) and protein S (PROS1) by specific cleavage of Arg-Ile and Arg-Val bonds. May serve as an exosite by which the enzyme recognizes and binds to the Gla domain of factor X (F10) and factor IX (F9) in a calcium-dependent manner. This Daboia siamensis (Eastern Russel's viper) protein is Snaclec coagulation factor X-activating enzyme light chain 1 (LC1).